The following is a 195-amino-acid chain: Myelin-associated neurite-outgrowth inhibitor (195 aa).

Met-1 bears the N-acetylmethionine mark. Residues 1 to 18 (MNPVYSPGSSGVPYANAK) lie on the Cytoplasmic side of the membrane. Residue Ser-6 is modified to Phosphoserine. The chain crosses the membrane as a helical span at residues 19 to 42 (GIGYPAGFPMGYAAAAPAYSPNMY). The Extracellular segment spans residues 43 to 142 (PGANPTFQTG…PAPIPPPRGN (100 aa)). Residue Asn-46 is glycosylated (N-linked (GlcNAc...) asparagine). The chain crosses the membrane as a helical span at residues 143–164 (GVTMGMVAGTTMAMSAGTLLTA). The Cytoplasmic segment spans residues 165 to 195 (HSPTPVAPHPVTVPTYRAPGTPTYSYVPPQW).

It belongs to the FAM168 family. As to quaternary structure, may form homodimers. May interact with DAZAP2, FAM168A, PRDX6, RBM6, TMTC1 and YPEL2. Interacts with CDC27. In terms of processing, N-glycosylated. In terms of tissue distribution, expressed in the brain, within neuronal axonal fibers and associated with myelin sheets (at protein level). Expression tends to be lower in the brain of Alzheimer disease patients compared to healthy individuals (at protein level).

It localises to the cytoplasm. The protein resides in the perinuclear region. It is found in the cell membrane. The protein localises to the cell projection. Its subcellular location is the axon. Functionally, inhibitor of neuronal axonal outgrowth. Acts as a negative regulator of CDC42 and STAT3 and a positive regulator of STMN2. Positive regulator of CDC27. The sequence is that of Myelin-associated neurite-outgrowth inhibitor (FAM168B) from Homo sapiens (Human).